A 480-amino-acid chain; its full sequence is uncharacterized protein (480 aa).

Positions 1–20 (MDVKDTGINRSDTPISDQDH) are disordered.

This is an uncharacterized protein from Arabidopsis thaliana (Mouse-ear cress).